Consider the following 270-residue polypeptide: Probable aquaporin NIP-type (270 aa).

2 helical membrane passes run Leu-45–Val-65 and Val-72–Val-92. An NPA 1 motif is present at residues Asn-101–Ala-103. 3 consecutive transmembrane segments (helical) span residues Leu-121 to Phe-141, Ser-160 to Thr-180, and Val-188 to Ser-208. An NPA 2 motif is present at residues Asn-213 to Ala-215. The helical transmembrane segment at Trp-231–Ile-251 threads the bilayer.

The protein belongs to the MIP/aquaporin (TC 1.A.8) family. NIP (TC 1.A.8.12) subfamily. As to expression, pollen specific.

It is found in the membrane. In terms of biological role, aquaporins facilitate the transport of water and small neutral solutes across cell membranes. This Nicotiana alata (Winged tobacco) protein is Probable aquaporin NIP-type.